The sequence spans 159 residues: Ribosomal RNA large subunit methyltransferase H (159 aa).

Residues L76, G108, and 127-132 each bind S-adenosyl-L-methionine; that span reads FGLLTL.

This sequence belongs to the RNA methyltransferase RlmH family. In terms of assembly, homodimer.

It is found in the cytoplasm. The enzyme catalyses pseudouridine(1915) in 23S rRNA + S-adenosyl-L-methionine = N(3)-methylpseudouridine(1915) in 23S rRNA + S-adenosyl-L-homocysteine + H(+). Functionally, specifically methylates the pseudouridine at position 1915 (m3Psi1915) in 23S rRNA. The sequence is that of Ribosomal RNA large subunit methyltransferase H from Streptococcus mutans serotype c (strain ATCC 700610 / UA159).